A 300-amino-acid polypeptide reads, in one-letter code: Inosose dehydratase (300 aa).

This sequence belongs to the IolE/MocC family. The cofactor is glutathione. Co(2+) is required as a cofactor. Requires Mn(2+) as cofactor.

The catalysed reaction is scyllo-inosose = 3D-3,5/4-trihydroxycyclohexane-1,2-dione + H2O. Its function is as follows. Catalyzes the dehydration of inosose (2-keto-myo-inositol, 2KMI or 2,4,6/3,5-pentahydroxycyclohexanone) to 3D-(3,5/4)-trihydroxycyclohexane-1,2-dione (D-2,3-diketo-4-deoxy-epi-inositol). This Mesomycoplasma hyopneumoniae (strain 232) (Mycoplasma hyopneumoniae) protein is Inosose dehydratase.